The primary structure comprises 184 residues: Ribosome-recycling factor (184 aa).

The protein belongs to the RRF family.

The protein localises to the cytoplasm. In terms of biological role, responsible for the release of ribosomes from messenger RNA at the termination of protein biosynthesis. May increase the efficiency of translation by recycling ribosomes from one round of translation to another. This is Ribosome-recycling factor from Lachnoclostridium phytofermentans (strain ATCC 700394 / DSM 18823 / ISDg) (Clostridium phytofermentans).